A 122-amino-acid chain; its full sequence is Large ribosomal subunit protein uL14 (122 aa).

It belongs to the universal ribosomal protein uL14 family. As to quaternary structure, part of the 50S ribosomal subunit. Forms a cluster with proteins L3 and L19. In the 70S ribosome, L14 and L19 interact and together make contacts with the 16S rRNA in bridges B5 and B8.

Binds to 23S rRNA. Forms part of two intersubunit bridges in the 70S ribosome. This is Large ribosomal subunit protein uL14 from Trichlorobacter lovleyi (strain ATCC BAA-1151 / DSM 17278 / SZ) (Geobacter lovleyi).